A 97-amino-acid chain; its full sequence is MARKYEIMYIIRPNIEEDEKKAVVERFDGILTENGAEIIESKEWGKRRLAYEINDYRDGFYHIVKLNADKADSINEFDRLAKISDDIIRHMVIKEEA.

It belongs to the bacterial ribosomal protein bS6 family.

Binds together with bS18 to 16S ribosomal RNA. This chain is Small ribosomal subunit protein bS6, found in Listeria monocytogenes serotype 4b (strain CLIP80459).